Consider the following 358-residue polypeptide: Peptide chain release factor 1 (358 aa).

Position 233 is an N5-methylglutamine (Gln-233).

It belongs to the prokaryotic/mitochondrial release factor family. Methylated by PrmC. Methylation increases the termination efficiency of RF1.

The protein resides in the cytoplasm. Its function is as follows. Peptide chain release factor 1 directs the termination of translation in response to the peptide chain termination codons UAG and UAA. The chain is Peptide chain release factor 1 from Listeria innocua serovar 6a (strain ATCC BAA-680 / CLIP 11262).